The primary structure comprises 366 residues: D-alanine--D-alanine ligase (366 aa).

The ATP-grasp domain occupies 149-358 (KIAFDHAGLP…FSELVDTLIQ (210 aa)). Residue 185–240 (ETTLEYPCFVKPANLGSSVGIAKVRSRSELETALDNAASYDRRIIVEAGVEAKELE) coordinates ATP. Mg(2+)-binding residues include Asp-311, Glu-325, and Asn-327.

Belongs to the D-alanine--D-alanine ligase family. Mg(2+) serves as cofactor. Requires Mn(2+) as cofactor.

It localises to the cytoplasm. It carries out the reaction 2 D-alanine + ATP = D-alanyl-D-alanine + ADP + phosphate + H(+). It functions in the pathway cell wall biogenesis; peptidoglycan biosynthesis. Cell wall formation. This Trichodesmium erythraeum (strain IMS101) protein is D-alanine--D-alanine ligase.